We begin with the raw amino-acid sequence, 116 residues long: Flagellar transcriptional regulator FlhD (116 aa).

The protein belongs to the FlhD family. In terms of assembly, homodimer; disulfide-linked. Forms a heterohexamer composed of two FlhC and four FlhD subunits. Each FlhC binds a FlhD dimer, forming a heterotrimer, and a hexamer assembles by dimerization of two heterotrimers.

It is found in the cytoplasm. Its function is as follows. Functions in complex with FlhC as a master transcriptional regulator that regulates transcription of several flagellar and non-flagellar operons by binding to their promoter region. Activates expression of class 2 flagellar genes, including fliA, which is a flagellum-specific sigma factor that turns on the class 3 genes. Also regulates genes whose products function in a variety of physiological pathways. In Serratia proteamaculans (strain 568), this protein is Flagellar transcriptional regulator FlhD.